Reading from the N-terminus, the 140-residue chain is Mercuric transport protein MerC (140 aa).

The Cytoplasmic segment spans residues 2–10 (GLMTRIADK). A helical transmembrane segment spans residues 11–31 (TGALGSVVSAMGCAACFPALA). Gly-22 and Ala-25 together coordinate Hg(2+). The Periplasmic portion of the chain corresponds to 32–46 (SFGAAIGLGFLSQYE). The helical transmembrane segment at 47-67 (GLFISRLLPLFAALAFLANAL) threads the bilayer. Over 68-78 (GWFSHRQWLRS) the chain is Cytoplasmic. A helical transmembrane segment spans residues 79–99 (LLGMIGPAIVFAATVWLLGNW). At 100 to 106 (WTANLMY) the chain is on the periplasmic side. The chain crosses the membrane as a helical span at residues 107–127 (VGLALMIGVSIWDFVSPAHRR). Residues 128–140 (CGPDGCELPAKRL) are Cytoplasmic-facing.

It is found in the cell inner membrane. Uptake of Hg(2+) is decreased by iodoacetamide and iodoacetate, and is completely inhibited by the thiol-modifying reagent N-ethylmaleimide (NEM). In terms of biological role, involved in mercuric ion uptake and binding. MerC-mediated Hg(2+) uptake does not require MerP. This is Mercuric transport protein MerC from Shigella flexneri.